The sequence spans 87 residues: Small ribosomal subunit protein bS16 (87 aa).

The protein belongs to the bacterial ribosomal protein bS16 family.

This is Small ribosomal subunit protein bS16 from Fusobacterium nucleatum subsp. nucleatum (strain ATCC 25586 / DSM 15643 / BCRC 10681 / CIP 101130 / JCM 8532 / KCTC 2640 / LMG 13131 / VPI 4355).